The following is a 161-amino-acid chain: Transcription elongation factor GreA (161 aa).

The stretch at L8–R28 forms a coiled coil.

Belongs to the GreA/GreB family.

Necessary for efficient RNA polymerase transcription elongation past template-encoded arresting sites. The arresting sites in DNA have the property of trapping a certain fraction of elongating RNA polymerases that pass through, resulting in locked ternary complexes. Cleavage of the nascent transcript by cleavage factors such as GreA or GreB allows the resumption of elongation from the new 3'terminus. GreA releases sequences of 2 to 3 nucleotides. In Mycoplasma genitalium (strain ATCC 33530 / DSM 19775 / NCTC 10195 / G37) (Mycoplasmoides genitalium), this protein is Transcription elongation factor GreA.